A 449-amino-acid chain; its full sequence is Tubulin alpha chain (449 aa).

8 residues coordinate GTP: Q11, E71, S140, G144, T145, T179, N206, and N228. A Mg(2+)-binding site is contributed by E71. E254 is a catalytic residue.

It belongs to the tubulin family. As to quaternary structure, dimer of alpha and beta chains. A typical microtubule is a hollow water-filled tube with an outer diameter of 25 nm and an inner diameter of 15 nM. Alpha-beta heterodimers associate head-to-tail to form protofilaments running lengthwise along the microtubule wall with the beta-tubulin subunit facing the microtubule plus end conferring a structural polarity. Microtubules usually have 13 protofilaments but different protofilament numbers can be found in some organisms and specialized cells. The cofactor is Mg(2+).

Its subcellular location is the cytoplasm. The protein resides in the cytoskeleton. It catalyses the reaction GTP + H2O = GDP + phosphate + H(+). Its function is as follows. Tubulin is the major constituent of microtubules, a cylinder consisting of laterally associated linear protofilaments composed of alpha- and beta-tubulin heterodimers. Microtubules grow by the addition of GTP-tubulin dimers to the microtubule end, where a stabilizing cap forms. Below the cap, tubulin dimers are in GDP-bound state, owing to GTPase activity of alpha-tubulin. This Sordaria macrospora (strain ATCC MYA-333 / DSM 997 / K(L3346) / K-hell) protein is Tubulin alpha chain (TUBA).